The chain runs to 166 residues: Large ribosomal subunit protein uL10 (166 aa).

Belongs to the universal ribosomal protein uL10 family. As to quaternary structure, part of the ribosomal stalk of the 50S ribosomal subunit. The N-terminus interacts with L11 and the large rRNA to form the base of the stalk. The C-terminus forms an elongated spine to which L12 dimers bind in a sequential fashion forming a multimeric L10(L12)X complex.

Functionally, forms part of the ribosomal stalk, playing a central role in the interaction of the ribosome with GTP-bound translation factors. The protein is Large ribosomal subunit protein uL10 of Ureaplasma parvum serovar 3 (strain ATCC 27815 / 27 / NCTC 11736).